We begin with the raw amino-acid sequence, 338 residues long: Glycerol-3-phosphate dehydrogenase [NAD(P)+] (338 aa).

NADPH contacts are provided by Ser14, Tyr15, His35, and Lys109. Sn-glycerol 3-phosphate-binding residues include Lys109, Gly138, and Thr140. Ala142 contacts NADPH. Residues Lys194, Asp247, Ser257, Arg258, and Asn259 each coordinate sn-glycerol 3-phosphate. The active-site Proton acceptor is Lys194. NADPH is bound at residue Arg258. Val282 and Glu284 together coordinate NADPH.

This sequence belongs to the NAD-dependent glycerol-3-phosphate dehydrogenase family.

It is found in the cytoplasm. The enzyme catalyses sn-glycerol 3-phosphate + NAD(+) = dihydroxyacetone phosphate + NADH + H(+). The catalysed reaction is sn-glycerol 3-phosphate + NADP(+) = dihydroxyacetone phosphate + NADPH + H(+). It functions in the pathway membrane lipid metabolism; glycerophospholipid metabolism. Functionally, catalyzes the reduction of the glycolytic intermediate dihydroxyacetone phosphate (DHAP) to sn-glycerol 3-phosphate (G3P), the key precursor for phospholipid synthesis. The chain is Glycerol-3-phosphate dehydrogenase [NAD(P)+] from Sodalis glossinidius (strain morsitans).